A 331-amino-acid polypeptide reads, in one-letter code: Phenylalanine--tRNA ligase alpha subunit (331 aa).

Glu-256 is a binding site for Mg(2+).

The protein belongs to the class-II aminoacyl-tRNA synthetase family. Phe-tRNA synthetase alpha subunit type 1 subfamily. In terms of assembly, tetramer of two alpha and two beta subunits. It depends on Mg(2+) as a cofactor.

Its subcellular location is the cytoplasm. The enzyme catalyses tRNA(Phe) + L-phenylalanine + ATP = L-phenylalanyl-tRNA(Phe) + AMP + diphosphate + H(+). This is Phenylalanine--tRNA ligase alpha subunit from Colwellia psychrerythraea (strain 34H / ATCC BAA-681) (Vibrio psychroerythus).